Reading from the N-terminus, the 99-residue chain is Nucleoid-associated protein str1598 (99 aa).

Belongs to the YbaB/EbfC family. In terms of assembly, homodimer.

The protein localises to the cytoplasm. It is found in the nucleoid. Functionally, binds to DNA and alters its conformation. May be involved in regulation of gene expression, nucleoid organization and DNA protection. In Streptococcus thermophilus (strain CNRZ 1066), this protein is Nucleoid-associated protein str1598.